The chain runs to 406 residues: Probable peptidoglycan glycosyltransferase FtsW (406 aa).

9 consecutive transmembrane segments (helical) span residues 22–42 (LWFV…VASA), 56–76 (FFMG…FMML), 86–106 (WGIL…VPGI), 116–136 (WINL…CMVV), 153–173 (LIGF…LLME), 186–206 (VIAL…IVIM), 280–300 (IWVE…FALM), 318–338 (FAGY…IINV), and 352–372 (LPLI…LFVV). The span at 383–397 (SKGGESEERKRKSDE) shows a compositional bias: basic and acidic residues. The disordered stretch occupies residues 383–406 (SKGGESEERKRKSDESIDDGEALA).

Belongs to the SEDS family. FtsW subfamily.

The protein localises to the cell inner membrane. It catalyses the reaction [GlcNAc-(1-&gt;4)-Mur2Ac(oyl-L-Ala-gamma-D-Glu-L-Lys-D-Ala-D-Ala)](n)-di-trans,octa-cis-undecaprenyl diphosphate + beta-D-GlcNAc-(1-&gt;4)-Mur2Ac(oyl-L-Ala-gamma-D-Glu-L-Lys-D-Ala-D-Ala)-di-trans,octa-cis-undecaprenyl diphosphate = [GlcNAc-(1-&gt;4)-Mur2Ac(oyl-L-Ala-gamma-D-Glu-L-Lys-D-Ala-D-Ala)](n+1)-di-trans,octa-cis-undecaprenyl diphosphate + di-trans,octa-cis-undecaprenyl diphosphate + H(+). Its pathway is cell wall biogenesis; peptidoglycan biosynthesis. Its function is as follows. Peptidoglycan polymerase that is essential for cell division. This Marinomonas mediterranea (strain ATCC 700492 / JCM 21426 / NBRC 103028 / MMB-1) protein is Probable peptidoglycan glycosyltransferase FtsW.